Consider the following 248-residue polypeptide: 3-deoxy-manno-octulosonate cytidylyltransferase (248 aa).

Belongs to the KdsB family.

The protein resides in the cytoplasm. The catalysed reaction is 3-deoxy-alpha-D-manno-oct-2-ulosonate + CTP = CMP-3-deoxy-beta-D-manno-octulosonate + diphosphate. The protein operates within nucleotide-sugar biosynthesis; CMP-3-deoxy-D-manno-octulosonate biosynthesis; CMP-3-deoxy-D-manno-octulosonate from 3-deoxy-D-manno-octulosonate and CTP: step 1/1. Its pathway is bacterial outer membrane biogenesis; lipopolysaccharide biosynthesis. Its function is as follows. Activates KDO (a required 8-carbon sugar) for incorporation into bacterial lipopolysaccharide in Gram-negative bacteria. The protein is 3-deoxy-manno-octulosonate cytidylyltransferase of Chlorobaculum tepidum (strain ATCC 49652 / DSM 12025 / NBRC 103806 / TLS) (Chlorobium tepidum).